Consider the following 209-residue polypeptide: Response regulator protein VraR (209 aa).

The region spanning 4–120 is the Response regulatory domain; that stretch reads KVLFVDDHEM…DIADAVRKTS (117 aa). Asp-55 is modified (4-aspartylphosphate). Positions 141 to 206 constitute an HTH luxR-type domain; sequence RAELYEMLTE…QAVIYAFQHN (66 aa). Positions 165–184 form a DNA-binding region, H-T-H motif; it reads NQEIASASHITIKTVKTHVS.

As to quaternary structure, homodimer. Phosphorylated by VraS. Phosphorylation state of VraR controls dimerization of the protein.

Its function is as follows. Member of the two-component regulatory system VraS/VraR involved in the control of the cell wall peptidoglycan biosynthesis. Upon cellular stress, the histidine kinase VraS transfers the phosphoryl group onto VraR. Upon phosphorylation, VraR dimerizes at the N-terminal domain. In turn, phosphorylation-induced dimerization expand and enhance the VraR binding to its own promoter leading to increased expression and subsequent modulation of as many as 40 genes, which ultimately constitute the S.aureus response to cell wall damage. In addition, inhibits the host autophagic flux and delays the early stage of autophagosome formation, thereby promoting bacterial survival. Facilitates the ability of S.aureus to resist host polymorphonuclear leukocytes-mediated phagocytosis and killing thus contributing to immune evasion. This chain is Response regulator protein VraR (vraR), found in Staphylococcus aureus (strain NCTC 8325 / PS 47).